The primary structure comprises 131 residues: Histone H2A.2 (131 aa).

The tract at residues 1–22 is disordered; the sequence is MSGGKGKAGSSEKASTSRSAKA. At Ser2 the chain carries N-acetylserine. 2 positions are modified to N6-acetyllysine: Lys5 and Lys7. Position 105 is an N5-methylglutamine (Gln105). Ser128 carries the phosphoserine modification. The short motif at 128-129 is the [ST]-Q motif element; that stretch reads SQ.

The protein belongs to the histone H2A family. As to quaternary structure, the nucleosome is a histone octamer containing two molecules each of H2A, H2B, H3 and H4 assembled in one H3-H4 heterotetramer and two H2A-H2B heterodimers. The octamer wraps approximately 147 bp of DNA. Phosphorylated to form H2AS128ph (gamma-H2A) in response to DNA double-strand breaks (DSBs) generated by exogenous genotoxic agents and by stalled replication forks. Phosphorylation is dependent on the DNA damage checkpoint kinases MEC1/ATR and TEL1/ATM, spreads on either side of a detected DSB site and may mark the surrounding chromatin for recruitment of proteins required for DNA damage signaling and repair. Gamma-H2A is removed from the DNA prior to the strand invasion-primer extension step of the repair process and subsequently dephosphorylated. Dephosphorylation is necessary for efficient recovery from the DNA damage checkpoint. In terms of processing, acetylated by ESA1 to form H2AK4ac and H2AK7ac.

Its subcellular location is the nucleus. It is found in the chromosome. Core component of nucleosome which plays a central role in DNA double strand break (DSB) repair. Nucleosomes wrap and compact DNA into chromatin, limiting DNA accessibility to the cellular machineries which require DNA as a template. Histones thereby play a central role in transcription regulation, DNA repair, DNA replication and chromosomal stability. DNA accessibility is regulated via a complex set of post-translational modifications of histones, also called histone code, and nucleosome remodeling. The polypeptide is Histone H2A.2 (HTA2) (Candida albicans (strain SC5314 / ATCC MYA-2876) (Yeast)).